The primary structure comprises 430 residues: Probable sugar isomerase mlr5709 (430 aa).

3 residues coordinate Mn(2+): histidine 257, aspartate 289, and aspartate 291.

The protein belongs to the rhamnose isomerase family. Requires Mn(2+) as cofactor.

This chain is Probable sugar isomerase mlr5709, found in Mesorhizobium japonicum (strain LMG 29417 / CECT 9101 / MAFF 303099) (Mesorhizobium loti (strain MAFF 303099)).